Reading from the N-terminus, the 444-residue chain is Prenyltransferase phnF (444 aa).

The protein belongs to the tryptophan dimethylallyltransferase family.

It carries out the reaction 2,3,4,7,9-pentahydroxy-6-methyl-1H-phenalen-1-one + dimethylallyl diphosphate = 2,4,7,9-tetrahydroxy-6-methyl-8-(2-methylbut-3-en-2-yl)-1-oxo-1H-phenalen-3-ol + diphosphate. Its pathway is secondary metabolite biosynthesis. Prenyltransferase; part of the gene cluster that mediates the biosynthesis of phenalenones such as herqueinone, compounds that have been reported to treat tumors, bacterial infections and/or mycoses, and rheumatic diseases. The non-reducing polyketide synthase phnA synthesizes the heptaketide backbone and cyclizes it into the angular, hemiketal-containing naphtho-gamma-pyrone prephenalenone. The product template (PT) domain of phnA catalyzes only the C4-C9 aldol condensation, which is unprecedented among known PT domains. The transformation of prephenalenone to phenalenones requires an FAD-dependent monooxygenase phnB, which catalyzes the C2 aromatic hydroxylation of prephenalenone and ring opening of the gamma-pyrone ring simultaneously. Subsequent intramolecular deprotonation of C3 phenolic oxygen accelerates phenalenone ring closure to yield the tricyclic phenalenone core with a C2 hydroxylation. The prenyltransferase phnF further catalyzes reverse C-prenylation of phenalenone by direct electrophilic substitution at C6, or possibly via first a forward O-prenylation of a neighboring phenol in phenalenone, followed by a Claisen rearrangement. The hydroalkoxylation enzyme phnH catalyzes the 5-exo-trig cyclization via acid catalysis after the spontaneous deprotonation of 7-OH, which leads to the formation of the dihydrobenzofuran atrovenetin. Atrovenetin is further converted to deoxyherqueinone by the O-methyltransferase phnC which can methylate C2-OH to stabilize the northern portion of the phenalenone core. Finally, the oxidoreductase phnG converts deoxyherqueinone to herqueinone via C6 hydroxylation. This chain is Prenyltransferase phnF, found in Penicillium herquei.